Reading from the N-terminus, the 297-residue chain is Calponin-1 (297 aa).

One can recognise a Calponin-homology (CH) domain in the interval H28–A131. Calponin-like repeat units follow at residues I164–Y189, I204–F229, and V243–Y268. Residue T170 is modified to Phosphothreonine; by ROCK2. S175 bears the Phosphoserine; by ROCK2 mark. Residues T180 and T184 each carry the phosphothreonine; by ROCK2 modification. The residue at position 259 (T259) is a Phosphothreonine; by ROCK2.

The protein belongs to the calponin family. As to quaternary structure, part of cGMP kinase signaling complex at least composed of ACTA2/alpha-actin, CNN1/calponin H1, PLN/phospholamban, PRKG1 and ITPR1. In terms of tissue distribution, smooth muscle, and tissues containing significant amounts of smooth muscle.

Functionally, thin filament-associated protein that is implicated in the regulation and modulation of smooth muscle contraction. It is capable of binding to actin, calmodulin and tropomyosin. The interaction of calponin with actin inhibits the actomyosin Mg-ATPase activity. The sequence is that of Calponin-1 (CNN1) from Homo sapiens (Human).